Reading from the N-terminus, the 372-residue chain is N-methyl-L-tryptophan oxidase (372 aa).

4–34 (DLIIIGSGSVGAAAGYYATRAGLKVLMTDAH) is an FAD binding site. S-8alpha-FAD cysteine is present on cysteine 307.

This sequence belongs to the MSOX/MTOX family. MTOX subfamily. As to quaternary structure, monomer. Requires FAD as cofactor.

The catalysed reaction is N(alpha)-methyl-L-tryptophan + O2 + H2O = L-tryptophan + formaldehyde + H2O2. Functionally, catalyzes the oxidative demethylation of N-methyl-L-tryptophan. This is N-methyl-L-tryptophan oxidase from Salmonella typhi.